Here is a 72-residue protein sequence, read N- to C-terminus: MSYQQQQCKQPCQPPPVCPTPKCPEPCPPPKCPEPCPPPKCPQPCPPQQCQQKCPPVTPSPPCQPKCPPKSK.

A compositionally biased stretch (low complexity) spans 1–11 (MSYQQQQCKQP). Residues 1 to 20 (MSYQQQQCKQPCQPPPVCPT) are disordered. 3 tandem repeats follow at residues 21 to 29 (PKCPEPCPP), 30 to 38 (PKCPEPCPP), and 39 to 47 (PKCPQPCPP). The 3 X 9 AA tandem repeats of P-K-C-P-[EQ]-P-C-P-P stretch occupies residues 21-47 (PKCPEPCPPPKCPEPCPPPKCPQPCPP). The segment at 42–72 (PQPCPPQQCQQKCPPVTPSPPCQPKCPPKSK) is disordered. Over residues 56–72 (PVTPSPPCQPKCPPKSK) the composition is skewed to pro residues.

This sequence belongs to the cornifin (SPRR) family.

It is found in the cytoplasm. Functionally, cross-linked envelope protein of keratinocytes. It is a keratinocyte protein that first appears in the cell cytosol, but ultimately becomes cross-linked to membrane proteins by transglutaminase. All that results in the formation of an insoluble envelope beneath the plasma membrane. This Homo sapiens (Human) protein is Small proline-rich protein 2E (SPRR2E).